A 179-amino-acid polypeptide reads, in one-letter code: ATP synthase subunit b (179 aa).

A helical transmembrane segment spans residues 13–33 (IHIDELVFGLIAFAVIFALVY).

Belongs to the ATPase B chain family. As to quaternary structure, F-type ATPases have 2 components, F(1) - the catalytic core - and F(0) - the membrane proton channel. F(1) has five subunits: alpha(3), beta(3), gamma(1), delta(1), epsilon(1). F(0) has three main subunits: a(1), b(2) and c(10-14). The alpha and beta chains form an alternating ring which encloses part of the gamma chain. F(1) is attached to F(0) by a central stalk formed by the gamma and epsilon chains, while a peripheral stalk is formed by the delta and b chains.

The protein resides in the cell membrane. In terms of biological role, f(1)F(0) ATP synthase produces ATP from ADP in the presence of a proton or sodium gradient. F-type ATPases consist of two structural domains, F(1) containing the extramembraneous catalytic core and F(0) containing the membrane proton channel, linked together by a central stalk and a peripheral stalk. During catalysis, ATP synthesis in the catalytic domain of F(1) is coupled via a rotary mechanism of the central stalk subunits to proton translocation. Component of the F(0) channel, it forms part of the peripheral stalk, linking F(1) to F(0). The chain is ATP synthase subunit b from Thermobifida fusca (strain YX).